Here is an 89-residue protein sequence, read N- to C-terminus: Small ribosomal subunit protein uS15 (89 aa).

This sequence belongs to the universal ribosomal protein uS15 family. Part of the 30S ribosomal subunit. Forms a bridge to the 50S subunit in the 70S ribosome, contacting the 23S rRNA.

Functionally, one of the primary rRNA binding proteins, it binds directly to 16S rRNA where it helps nucleate assembly of the platform of the 30S subunit by binding and bridging several RNA helices of the 16S rRNA. Forms an intersubunit bridge (bridge B4) with the 23S rRNA of the 50S subunit in the ribosome. This is Small ribosomal subunit protein uS15 from Protochlamydia amoebophila (strain UWE25).